A 136-amino-acid chain; its full sequence is Nucleoside diphosphate kinase (136 aa).

6 residues coordinate ATP: lysine 10, phenylalanine 58, arginine 86, threonine 92, arginine 104, and asparagine 114. Residue histidine 117 is the Pros-phosphohistidine intermediate of the active site.

This sequence belongs to the NDK family. Homotetramer. It depends on Mg(2+) as a cofactor.

The protein localises to the cytoplasm. The enzyme catalyses a 2'-deoxyribonucleoside 5'-diphosphate + ATP = a 2'-deoxyribonucleoside 5'-triphosphate + ADP. The catalysed reaction is a ribonucleoside 5'-diphosphate + ATP = a ribonucleoside 5'-triphosphate + ADP. Major role in the synthesis of nucleoside triphosphates other than ATP. The ATP gamma phosphate is transferred to the NDP beta phosphate via a ping-pong mechanism, using a phosphorylated active-site intermediate. This Corynebacterium glutamicum (strain R) protein is Nucleoside diphosphate kinase.